The primary structure comprises 256 residues: Capsid protein (256 aa).

A Bipartite nuclear localization signal motif is present at residues 3–20; sequence KRPADIIISTPGSKVRRR. The Nuclear localization signal signature appears at 40 to 54; the sequence is KRQSWTNRPINRKPR. The segment at 68–85 is a zinc-finger region; it reads CEGPCKVQSFESRHDVVH. The Nuclear export signal motif lies at 101–122; the sequence is LTHRVGKRFCVKSIYILGKIWM. Residues 200 to 247 carry the Bipartite nuclear localization signal motif; sequence RRFFRVNNYVVYNQQEAGKYENHTENALMLYMACTHASNPVYATLKIR.

Belongs to the geminiviridae capsid protein family. As to quaternary structure, homomultimer. Binds to single-stranded and double-stranded viral DNA. Interacts (via nuclear localization signals) with host importin alpha-1a.

It localises to the virion. The protein localises to the host nucleus. In terms of biological role, encapsidates the viral DNA into characteristic twinned ('geminate') particles. Binds the genomic viral ssDNA and shuttles it into and out of the cell nucleus. The CP of bipartite geminiviruses is not required for cell-to-cell or systemic movement. This chain is Capsid protein, found in Manihot esculenta (Cassava).